The primary structure comprises 891 residues: Translation initiation factor IF-2 (891 aa).

The interval 50–303 (KKEHGSADES…TSMQHGFDKS (254 aa)) is disordered. 2 stretches are compositionally biased toward basic and acidic residues: residues 102 to 237 (TLEE…KTAD) and 245 to 261 (HARE…EQQP). Positions 390–559 (GRAPVVTIMG…LLQSEVLELT (170 aa)) constitute a tr-type G domain. Positions 399–406 (GHVDHGKT) are G1. 399-406 (GHVDHGKT) contributes to the GTP binding site. The interval 424-428 (GITQH) is G2. Residues 445-448 (DTPG) are G3. GTP is bound by residues 445–449 (DTPGH) and 499–502 (NKID). Residues 499 to 502 (NKID) form a G4 region. Residues 535–537 (SAK) form a G5 region.

The protein belongs to the TRAFAC class translation factor GTPase superfamily. Classic translation factor GTPase family. IF-2 subfamily.

It localises to the cytoplasm. Functionally, one of the essential components for the initiation of protein synthesis. Protects formylmethionyl-tRNA from spontaneous hydrolysis and promotes its binding to the 30S ribosomal subunits. Also involved in the hydrolysis of GTP during the formation of the 70S ribosomal complex. This chain is Translation initiation factor IF-2, found in Aliivibrio salmonicida (strain LFI1238) (Vibrio salmonicida (strain LFI1238)).